Here is a 90-residue protein sequence, read N- to C-terminus: YcgL domain-containing protein Spro_2755 (90 aa).

Residues 1–85 form the YcgL domain; sequence MLCVIYRSSK…PLENLLKQHL (85 aa).

This is YcgL domain-containing protein Spro_2755 from Serratia proteamaculans (strain 568).